A 977-amino-acid polypeptide reads, in one-letter code: Structural protein ORF43 (977 aa).

The disordered stretch occupies residues 531–556; sequence DNDNINKQQQQQRERNDDDDDDDDST.

The protein belongs to the ascovirus HvAV ORF146 family.

It localises to the virion. This is Structural protein ORF43 from Noctuidae (owlet moths).